The sequence spans 547 residues: Chaperonin GroEL (547 aa).

Residues 30–33, K51, 87–91, G415, and D495 contribute to the ATP site; these read TLGP and DGTTT.

It belongs to the chaperonin (HSP60) family. As to quaternary structure, forms a cylinder of 14 subunits composed of two heptameric rings stacked back-to-back. Interacts with the co-chaperonin GroES.

It is found in the cytoplasm. The enzyme catalyses ATP + H2O + a folded polypeptide = ADP + phosphate + an unfolded polypeptide.. Functionally, together with its co-chaperonin GroES, plays an essential role in assisting protein folding. The GroEL-GroES system forms a nano-cage that allows encapsulation of the non-native substrate proteins and provides a physical environment optimized to promote and accelerate protein folding. The chain is Chaperonin GroEL from Thiobacillus denitrificans (strain ATCC 25259 / T1).